A 97-amino-acid chain; its full sequence is Plastocyanin (97 aa).

In terms of domain architecture, Plastocyanin-like spans 1 to 97 (AEVKLGADDG…AGMKGEVTVT (97 aa)). Cu cation contacts are provided by H37, C82, H85, and M90.

It belongs to the plastocyanin family. Cu(2+) is required as a cofactor.

The protein localises to the plastid. It is found in the chloroplast thylakoid membrane. Functionally, participates in electron transfer between P700 and the cytochrome b6-f complex in photosystem I. This Daucus carota (Wild carrot) protein is Plastocyanin (PETE).